The primary structure comprises 207 residues: Small ribosomal subunit protein uS4 (207 aa).

In terms of domain architecture, S4 RNA-binding spans 96-156; that stretch reads RRLDNVVYRL…EKFKTSSFIA (61 aa).

This sequence belongs to the universal ribosomal protein uS4 family. Part of the 30S ribosomal subunit. Contacts protein S5. The interaction surface between S4 and S5 is involved in control of translational fidelity.

In terms of biological role, one of the primary rRNA binding proteins, it binds directly to 16S rRNA where it nucleates assembly of the body of the 30S subunit. Functionally, with S5 and S12 plays an important role in translational accuracy. The chain is Small ribosomal subunit protein uS4 from Leptospira interrogans serogroup Icterohaemorrhagiae serovar copenhageni (strain Fiocruz L1-130).